Reading from the N-terminus, the 86-residue chain is uncharacterized protein (86 aa).

The next 3 membrane-spanning stretches (helical) occupy residues Ile-4–Val-24, Met-34–Asn-54, and Asp-64–Leu-84.

This sequence to M.jannaschii MJ1223.

It localises to the cell membrane. This is an uncharacterized protein from Methanothermobacter thermautotrophicus (strain ATCC 29096 / DSM 1053 / JCM 10044 / NBRC 100330 / Delta H) (Methanobacterium thermoautotrophicum).